The chain runs to 338 residues: Anthranilate phosphoribosyltransferase (338 aa).

5-phospho-alpha-D-ribose 1-diphosphate contacts are provided by residues glycine 81, 84-85 (GD), serine 89, 91-94 (NVST), 109-117 (KHGNRALSS), and alanine 121. Glycine 81 contributes to the anthranilate binding site. A Mg(2+)-binding site is contributed by serine 93. An anthranilate-binding site is contributed by asparagine 112. Arginine 167 serves as a coordination point for anthranilate. Mg(2+) is bound by residues aspartate 226 and glutamate 227.

The protein belongs to the anthranilate phosphoribosyltransferase family. As to quaternary structure, homodimer. The cofactor is Mg(2+).

The enzyme catalyses N-(5-phospho-beta-D-ribosyl)anthranilate + diphosphate = 5-phospho-alpha-D-ribose 1-diphosphate + anthranilate. Its pathway is amino-acid biosynthesis; L-tryptophan biosynthesis; L-tryptophan from chorismate: step 2/5. Its function is as follows. Catalyzes the transfer of the phosphoribosyl group of 5-phosphorylribose-1-pyrophosphate (PRPP) to anthranilate to yield N-(5'-phosphoribosyl)-anthranilate (PRA). The protein is Anthranilate phosphoribosyltransferase of Rhodopseudomonas palustris (strain HaA2).